The chain runs to 810 residues: MSFYTAGLIHRARPGYRIIPESTATEDIELGAIGEETPLLSEGAVTAVEESAAVGLPELGAGLAGAIGTHADVLYRNRNVFKSVLTGNYTDLKGNPLKQRNAISEKTKQLGRGIFQGDFNRAFPDDLKLETEQEKKDLLRYYNHNRRLAGLSEAYPQGKGYAYAKSQKVLEAERRGLTVPGYKYLGPGNSLNRGQPTNQIDEDAKEHDEAYDKAKTSQEVSQADNTFVNKALDHIVNAINLKETPGNAFGAAIGAIGIGTKQAIEKHSGVIYPSVSGMSRQINSKYLNSWHDWIEQNKHNNFEGIQLPEDFYTEEQTLSDSPMSEGTKRKADTPVEEGPSKKGAHNAPHNSQGTDPQNPSSSGATTSXDVEMAMSLPGTGSGTSSGGGNTSGQEVYVIPRPFSNFGKKLSTYTKSHKFMIFGLANNVIGPTGTGTTAVNRLITTCLAEIPWQKLPLYMNQSEFDLLPPGSRVVECNVKVIFRTNRIAFETSSTATKQATLNQISNLQTAVGLNKLGWGIDRSFTAFQSDQPMIPTATSAPKYEPITGTTGYRGMIADYYGADSTNDAAFGNAGNYPHHQVGSFTFIQNYYCMYQQTNQGTGGWPCLAEHLQQFDSKTVNNQCLIDVTYKPKMGLIKPPLNYKIIGQPTAKGTISVGDNLVNMRGAVVINPPEATQSVTESTHNLTRNFPANLFNIYSDIEKSQILHKGPWGHENPQIQPSVHIGIQAVPALTTGALLVNSSPLNSWTDSMGYIDVMSSCTVMESQPTHFPFSTDANTNPGNTIYRINLTPNSLTSAFNGLYGNGATLGNV.

Disordered regions lie at residues 316 to 366 and 373 to 392; these read QTLS…GATT and AMSL…NTSG. Residues 348–366 show a composition bias toward polar residues; the sequence is PHNSQGTDPQNPSSSGATT. Gly residues predominate over residues 379–390; it reads TGSGTSSGGGNT.

It localises to the virion. In terms of biological role, capsid protein self-assembles to form an icosahedral capsid with a T=1 symmetry, about 22 nm in diameter, and consisting of 60 copies of size variants of the capsid protein which differ in the N-terminus. The capsid encapsulates the genomic ssDNA. Capsid proteins are responsible for the attachment to host cell receptors. This attachment induces virion internalization predominantly through clathrin-dependent endocytosis. The sequence is that of Capsid protein VP1 (VP) from Junonia coenia densovirus (isolate pBRJ/1990) (JcDNV).